Reading from the N-terminus, the 520-residue chain is MTEISILNDVQKIIVLDYGSQYNQLIARRIREFGVLSELKSHKITAQELHEINPIGIVLSGGPNSVYADNAFGIDPEIFELGIPILGICYGMQLITHKLGGKVVPAGQAGNREYGQSTLHLRETSKLFSGTPQEQLVLMSHGDAVTEIPEGFHLVGDSNDCPYAAIENTEKNLYGIQFHPEVRHSVYGNDILKNFAISICGARGDWSMDNFIDMEITKIRETVGDRKVLLGLSGGVDSSVVGVLLQKAIGDQLTCIFVDHGLLRKDEGDQVMGMLGGKFGLNIIRVDASKRFLDLLADVEDPEKKRKIIGNEFVYVFDDEASKLKGVDFLAQGTLYTDIIESGTETAQTIKSHHNVGGLPEDMQFELIEPLNTLFKDEVRALGIALGMPEEIVWRQPFPGPGLAIRVMGAITEEKLETVRESDAILREEIAKAGLDRDVWQYFTVNTGVRSVGVMGDGRTYDYTIAIRAITSIDGMTADFAQLPWDVLKKISTRIVNEVDHVNRIVYDITSKPPATVEWE.

One can recognise a Glutamine amidotransferase type-1 domain in the interval 12–205; it reads KIIVLDYGSQ…AISICGARGD (194 aa). Catalysis depends on Cys-89, which acts as the Nucleophile. Residues His-179 and Glu-181 contribute to the active site. Residues 206–395 enclose the GMPS ATP-PPase domain; sequence WSMDNFIDME…LGMPEEIVWR (190 aa). 233-239 is a binding site for ATP; it reads SGGVDSS.

In terms of assembly, homodimer.

It carries out the reaction XMP + L-glutamine + ATP + H2O = GMP + L-glutamate + AMP + diphosphate + 2 H(+). It functions in the pathway purine metabolism; GMP biosynthesis; GMP from XMP (L-Gln route): step 1/1. Its function is as follows. Catalyzes the synthesis of GMP from XMP. The polypeptide is GMP synthase [glutamine-hydrolyzing] (Streptococcus pyogenes serotype M2 (strain MGAS10270)).